Consider the following 190-residue polypeptide: Movement protein TGB3 (190 aa).

Topologically, residues 1-52 (MDPPVILHSPNCSCQFCSSELPSTHTCGSQDRTVPLHVEATAAGHMEAKNFS) are cytoplasmic. The chain crosses the membrane as a helical span at residues 53–73 (LQYVLLVAFVSVLLGFSFCVY). Residues 74–166 (LKSMSNDEAS…TPCENNVLLK (93 aa)) are Lumenal-facing. Phosphotyrosine is present on residues Y89 and Y120. Positions 89-93 (YQDLN) match the Involved in plasmodesmata targeting and virus cell-to-cell movement motif. The helical transmembrane segment at 167–187 (LWKDDLSFTIIAVTVLVGAML) threads the bilayer. Residues 188–190 (ARC) lie on the Cytoplasmic side of the membrane.

Belongs to the virgaviridae TGB3 movement protein family. In terms of assembly, interacts with movement protein TGB2. TGB1-TGB3-TGB2 complex formation is enhanced by ATP hydrolysis.

The protein resides in the host cell junction. Its subcellular location is the host plasmodesma. It localises to the host endoplasmic reticulum membrane. It is found in the host cytoplasm. The protein localises to the host cytoskeleton. Its function is as follows. Participates in the transport of viral genome to neighboring plant cells directly through plasmodesmata, without any budding. TGBp2 and TGBp3 are necessary for intracellular delivery of TGBp1-containing vRNPs to plasmodesmata. Can gate plasmodesmata and increase their size exclusion limit. Induces host actin cytoskeleton network thickening, which probably plays a major role in virus cell-to-cell movement. This Solanum nigrum (Black nightshade) protein is Movement protein TGB3.